A 308-amino-acid chain; its full sequence is MISPAQDPYASRTDRSSAIIARQDPVVYGEGKFADALSADQVQSYERDGFLLLENLFSDEEVAALLAEVERMTRDPAIVRREEAITEPGSNAVRSIFMVHVLSPILGRLVRDPRLANAARQILGAEVYVHQSRANMKPGFKGKEFYWHSDFETWHVEDGMPSMRALSCSVLLTDNNEANGPLMLVPGSHRQFISCVGETPRDHYKQSLKKQEYGVPDPVSLQLLAEQGGISTMTGKAGSVVFFDCNTMHGSNSNISPWPRANVFMVYNSMENTLNPPKYGLNPRPEHIATRQAFKAVRPLDSLKLVER.

Position 131 (Gln-131) interacts with L-ectoine. Residue Lys-137 coordinates 2-oxoglutarate. Residues His-148, Asp-150, and His-249 each contribute to the Fe cation site.

The protein belongs to the PhyH family. EctD subfamily. Homodimer. The cofactor is Fe(2+).

The enzyme catalyses L-ectoine + 2-oxoglutarate + O2 = 5-hydroxyectoine + succinate + CO2. Its function is as follows. Involved in the biosynthesis of 5-hydroxyectoine, called compatible solute, which helps organisms to survive extreme osmotic stress by acting as a highly soluble organic osmolyte. Catalyzes the 2-oxoglutarate-dependent selective hydroxylation of L-ectoine to yield (4S,5S)-5-hydroxyectoine. The protein is Ectoine dioxygenase of Bordetella parapertussis (strain 12822 / ATCC BAA-587 / NCTC 13253).